A 287-amino-acid chain; its full sequence is Nucleotide-binding protein Hhal_2130 (287 aa).

11–18 (GLSGSGKS) provides a ligand contact to ATP. GTP is bound at residue 63–66 (DARN).

It belongs to the RapZ-like family.

In terms of biological role, displays ATPase and GTPase activities. In Halorhodospira halophila (strain DSM 244 / SL1) (Ectothiorhodospira halophila (strain DSM 244 / SL1)), this protein is Nucleotide-binding protein Hhal_2130.